Here is a 357-residue protein sequence, read N- to C-terminus: Large ribosomal subunit protein mL45 (357 aa).

A disordered region spans residues 333–357; it reads EAKALPLRTTEKLEEAKKEKEQQEI. The segment covering 341 to 357 has biased composition (basic and acidic residues); that stretch reads TTEKLEEAKKEKEQQEI.

This sequence belongs to the mitochondrion-specific ribosomal protein mL45 family.

The protein resides in the mitochondrion. This is Large ribosomal subunit protein mL45 (mrpl-45) from Caenorhabditis elegans.